Here is a 1204-residue protein sequence, read N- to C-terminus: ATP-dependent helicase/nuclease subunit A (1204 aa).

The UvrD-like helicase ATP-binding domain maps to 2–469 (TKFTKEQNQA…IVLSDNFRST (468 aa)). 23-30 (ASAGSGKT) is a binding site for ATP. Residues 496 to 784 (EGQLQFGATY…KLMTIHASKG (289 aa)) form the UvrD-like helicase C-terminal domain.

Belongs to the helicase family. AddA subfamily. Heterodimer of AddA and AddB/RexB. Requires Mg(2+) as cofactor.

The enzyme catalyses Couples ATP hydrolysis with the unwinding of duplex DNA by translocating in the 3'-5' direction.. It carries out the reaction ATP + H2O = ADP + phosphate + H(+). Its function is as follows. The heterodimer acts as both an ATP-dependent DNA helicase and an ATP-dependent, dual-direction single-stranded exonuclease. Recognizes the chi site generating a DNA molecule suitable for the initiation of homologous recombination. The AddA nuclease domain is required for chi fragment generation; this subunit has the helicase and 3' -&gt; 5' nuclease activities. This Lactobacillus johnsonii (strain CNCM I-12250 / La1 / NCC 533) protein is ATP-dependent helicase/nuclease subunit A.